The primary structure comprises 368 residues: 1-aminocyclopropane-1-carboxylate oxidase (368 aa).

The region spanning 177–307 (PFILMGLLHY…RFSIPFFLDP (131 aa)) is the Fe2OG dioxygenase domain. The tract at residues 191–226 (HQEQEEEQEDDESNNGGKKSPNPDESKKPEVEKFGT) is disordered. A compositionally biased stretch (acidic residues) spans 194-203 (QEEEQEDDES). The span at 211-223 (PNPDESKKPEVEK) shows a compositional bias: basic and acidic residues. Residues His-229, Asp-231, and His-287 each contribute to the Fe cation site. Position 298 (Arg-298) interacts with 2-oxoglutarate.

The protein belongs to the iron/ascorbate-dependent oxidoreductase family. It depends on Fe(2+) as a cofactor.

It carries out the reaction 1-aminocyclopropane-1-carboxylate + L-ascorbate + O2 = ethene + L-dehydroascorbate + hydrogen cyanide + CO2 + 2 H2O. The protein operates within alkene biosynthesis; ethylene biosynthesis via S-adenosyl-L-methionine; ethylene from S-adenosyl-L-methionine: step 2/2. Functionally, involved in ethylene biosynthesis. Overexpression induces overproduction of ethylene. In Dictyostelium discoideum (Social amoeba), this protein is 1-aminocyclopropane-1-carboxylate oxidase (aco).